Reading from the N-terminus, the 354-residue chain is Uroporphyrinogen decarboxylase (354 aa).

Residues 27 to 31, Asp77, Tyr154, Thr209, and His327 contribute to the substrate site; that span reads RQAGR.

The protein belongs to the uroporphyrinogen decarboxylase family. Homodimer.

It is found in the cytoplasm. The enzyme catalyses uroporphyrinogen III + 4 H(+) = coproporphyrinogen III + 4 CO2. Its pathway is porphyrin-containing compound metabolism; protoporphyrin-IX biosynthesis; coproporphyrinogen-III from 5-aminolevulinate: step 4/4. In terms of biological role, catalyzes the decarboxylation of four acetate groups of uroporphyrinogen-III to yield coproporphyrinogen-III. The chain is Uroporphyrinogen decarboxylase from Mannheimia succiniciproducens (strain KCTC 0769BP / MBEL55E).